Reading from the N-terminus, the 43-residue chain is Protein PsbN (43 aa).

The chain crosses the membrane as a helical span at residues 5–27 (TLVAIFISCLLVSFTGYAPYTAS).

The protein belongs to the PsbN family.

It localises to the plastid. It is found in the chloroplast thylakoid membrane. Functionally, may play a role in photosystem I and II biogenesis. The protein is Protein PsbN of Anthoceros angustus (Hornwort).